Consider the following 317-residue polypeptide: Ribonuclease Z (317 aa).

Histidine 62, histidine 64, aspartate 66, histidine 67, histidine 139, aspartate 210, and histidine 268 together coordinate Zn(2+). The Proton acceptor role is filled by aspartate 66.

It belongs to the RNase Z family. Homodimer. Requires Zn(2+) as cofactor.

The enzyme catalyses Endonucleolytic cleavage of RNA, removing extra 3' nucleotides from tRNA precursor, generating 3' termini of tRNAs. A 3'-hydroxy group is left at the tRNA terminus and a 5'-phosphoryl group is left at the trailer molecule.. Zinc phosphodiesterase, which displays some tRNA 3'-processing endonuclease activity. Probably involved in tRNA maturation, by removing a 3'-trailer from precursor tRNA. This chain is Ribonuclease Z, found in Picosynechococcus sp. (strain ATCC 27264 / PCC 7002 / PR-6) (Agmenellum quadruplicatum).